The chain runs to 364 residues: Tyrosyl-DNA phosphodiesterase 2 (364 aa).

An N-acetylmethionine modification is found at methionine 1. Residues 1-10 are compositionally biased toward low complexity; sequence MERNSGPEAG. Positions 1 to 21 are disordered; that stretch reads MERNSGPEAGPEAELEEGEPE. Residue lysine 23 forms a Glycyl lysine isopeptide (Lys-Gly) (interchain with G-Cter in SUMO2) linkage. The disordered stretch occupies residues 68–108; sequence ESASESRPESLSEPGSCVDLTKEETNDSISSKTSTSEDKSV. 2 positions are modified to phosphothreonine; by ACVR1B: threonine 88 and threonine 92. Serine 95 carries the post-translational modification Phosphoserine. The interaction with 5' end of substrate DNA stretch occupies residues 122–126; the sequence is NIDGL. Positions 124 and 154 each coordinate Mg(2+). The interval 228-233 is interaction with 5' end of substrate DNA; it reads HLESTR. Residue aspartate 264 is the Proton donor/acceptor of the active site. The interval 266-268 is interaction with 5' end of substrate DNA; it reads NLR.

Belongs to the CCR4/nocturin family. In terms of assembly, interacts with TRAF2, TRAF3, TRAF5, TRAF6, TNFRSF8/CD30, TNFRSF5/CD40, TNFRSF1B/TNF-R75, ETS1, ETS2, FLI1, SMAD3 and ACVR1B/ALK4. Mg(2+) serves as cofactor. It depends on Mn(2+) as a cofactor. Ubiquitinated by TRAF6.

The protein localises to the nucleus. Its subcellular location is the PML body. The protein resides in the nucleolus. It localises to the cytoplasm. Functionally, DNA repair enzyme that can remove a variety of covalent adducts from DNA through hydrolysis of a 5'-phosphodiester bond, giving rise to DNA with a free 5' phosphate. Catalyzes the hydrolysis of dead-end complexes between DNA and the topoisomerase 2 (TOP2) active site tyrosine residue. The 5'-tyrosyl DNA phosphodiesterase activity can enable the repair of TOP2-induced DNA double-strand breaks/DSBs without the need for nuclease activity, creating a 'clean' DSB with 5'-phosphate termini that are ready for ligation. Thereby, protects the transcription of many genes involved in neurological development and maintenance from the abortive activity of TOP2. Hydrolyzes 5'-phosphoglycolates on protruding 5' ends on DSBs due to DNA damage by radiation and free radicals. Has preference for single-stranded DNA or duplex DNA with a 4 base pair overhang as substrate. Also has 3'-tyrosyl DNA phosphodiesterase activity, but less efficiently and much slower than TDP1. Constitutes the major if not only 5'-tyrosyl-DNA phosphodiesterase in cells. Also acts as an adapter by participating in the specific activation of MAP3K7/TAK1 in response to TGF-beta: associates with components of the TGF-beta receptor-TRAF6-TAK1 signaling module and promotes their ubiquitination dependent complex formation. Involved in non-canonical TGF-beta induced signaling routes. May also act as a negative regulator of ETS1 and may inhibit NF-kappa-B activation. Acts as a regulator of ribosome biogenesis following stress. This is Tyrosyl-DNA phosphodiesterase 2 (TDP2) from Bos taurus (Bovine).